The chain runs to 25 residues: Cruzioseptin-13 (25 aa).

Asn25 carries the asparagine amide modification.

In terms of tissue distribution, expressed by the skin glands.

The protein resides in the secreted. Has antimicrobial activity. The polypeptide is Cruzioseptin-13 (Cruziohyla calcarifer (Splendid leaf frog)).